The chain runs to 893 residues: Major vault protein (893 aa).

An N-acetylalanine modification is found at Ala-2. 9 MVP repeats span residues 2–56 (ATEE…VPPR), 57–111 (HYCT…DITP), 112–164 (LQVV…EIIQ), 165–217 (ATII…DLVD), 218–272 (AVIL…GVVP), 273–323 (ITTL…IQDV), 324–379 (YVLS…ERQA), 380–457 (IPLD…KTRV), and 458–520 (VSYR…LLGP). Lys-444 is covalently cross-linked (Glycyl lysine isopeptide (Lys-Gly) (interchain with G-Cter in SUMO2)). Residue Ser-445 is modified to Phosphoserine. Lys-704 participates in a covalent cross-link: Glycyl lysine isopeptide (Lys-Gly) (interchain with G-Cter in SUMO2). A disordered region spans residues 856-893 (QPLGRRVASGPSPGEGISPQSAQAPQAPGDNHVVPVLR).

As to quaternary structure, the vault ribonucleoprotein particle is a huge (400 A x 670 A) cage structure of 12.9 MDa. It consists of a dimer of half-vaults, with each half-vault comprising 39 identical major vault protein (MVP) chains, PARP4 and one or more vault RNAs (vRNAs). Interacts with TEP1. Interacts with PTEN and activated MAPK1. The phosphorylated protein interacts with the SH2 domains of PTPN11 and SRC. Interacts with APEX1. May interact with ZNF540. Post-translationally, phosphorylated on Tyr residues after EGF stimulation. Dephosphorylated by PTPN11.

The protein resides in the cytoplasm. It is found in the nucleus. Required for normal vault structure. Vaults are multi-subunit structures that may act as scaffolds for proteins involved in signal transduction. Vaults may also play a role in nucleo-cytoplasmic transport. Down-regulates IFNG-mediated STAT1 signaling and subsequent activation of JAK. Down-regulates SRC activity and signaling through MAP kinases. The sequence is that of Major vault protein (MVP) from Pongo abelii (Sumatran orangutan).